The chain runs to 105 residues: MFAVIKTGGKQYRVAANDVLTIEKLEVVAGDTVEFTEVLVIGEGADAAIGAPFVKGASVKAEVVEHNRGKKVIAFKKRRRQNSKRSRGHRQHHTVVRITDIVAAK.

Belongs to the bacterial ribosomal protein bL21 family. Part of the 50S ribosomal subunit. Contacts protein L20.

This protein binds to 23S rRNA in the presence of protein L20. This is Large ribosomal subunit protein bL21 from Rhizobium rhizogenes (strain K84 / ATCC BAA-868) (Agrobacterium radiobacter).